A 245-amino-acid chain; its full sequence is Superoxide dismutase 1 copper chaperone (245 aa).

In terms of domain architecture, HMA spans 8-71; the sequence is DFEATYAVEM…ALKNCGRDGI (64 aa). Cu cation is bound by residues C19 and C22. C29 and C66 form a disulfide bridge. Residues C224 and C226 each contribute to the Cu cation site.

Belongs to the CCS1 family. The cofactor is Cu(2+).

It localises to the cytoplasm. In terms of biological role, copper chaperone for superoxide dismutase 1 (SOD1). Binds copper ions and delivers them specifically to SOD1. In Kluyveromyces lactis (strain ATCC 8585 / CBS 2359 / DSM 70799 / NBRC 1267 / NRRL Y-1140 / WM37) (Yeast), this protein is Superoxide dismutase 1 copper chaperone (CCS1).